We begin with the raw amino-acid sequence, 142 residues long: 3-hydroxyacyl-[acyl-carrier-protein] dehydratase FabZ (142 aa).

H46 is a catalytic residue.

It belongs to the thioester dehydratase family. FabZ subfamily.

The protein resides in the cytoplasm. It carries out the reaction a (3R)-hydroxyacyl-[ACP] = a (2E)-enoyl-[ACP] + H2O. Functionally, involved in unsaturated fatty acids biosynthesis. Catalyzes the dehydration of short chain beta-hydroxyacyl-ACPs and long chain saturated and unsaturated beta-hydroxyacyl-ACPs. This Thermus thermophilus (strain ATCC BAA-163 / DSM 7039 / HB27) protein is 3-hydroxyacyl-[acyl-carrier-protein] dehydratase FabZ.